Consider the following 75-residue polypeptide: Small ribosomal subunit protein bS16c (75 aa).

It belongs to the bacterial ribosomal protein bS16 family.

It localises to the plastid. It is found in the chloroplast. In Cyanidium caldarium (Red alga), this protein is Small ribosomal subunit protein bS16c.